Consider the following 543-residue polypeptide: Aspartate/alanine antiporter (543 aa).

Transmembrane regions (helical) follow at residues 4 to 26, 33 to 55, 88 to 110, 117 to 139, 159 to 178, 362 to 381, 385 to 407, 428 to 450, 455 to 477, and 520 to 542; these read IGNF…GYLL, SFTL…LGVF, FGAK…AYAC, GPGI…GSSL, IPIV…LIFL, IINY…LGIV, VSGV…VQSI, SIGL…ISAI, ISVL…VICY, and VAPA…IVLL.

It belongs to the AAE transporter (TC 2.A.81) family.

It is found in the cell membrane. In terms of biological role, catalyzes the electrogenic exchange of aspartate with alanine. The protein is Aspartate/alanine antiporter (aspT) of Tetragenococcus halophilus (Pediococcus halophilus).